Reading from the N-terminus, the 159-residue chain is Large ribosomal subunit protein uL15 (159 aa).

Positions 14 to 44 are disordered; the sequence is ASRKRVGRGRATGWGCTSGRGNKGQNSRAGA. Residues 23–35 are compositionally biased toward gly residues; the sequence is RATGWGCTSGRGN.

It belongs to the universal ribosomal protein uL15 family. As to quaternary structure, part of the 50S ribosomal subunit.

Functionally, binds to the 23S rRNA. The sequence is that of Large ribosomal subunit protein uL15 from Solidesulfovibrio magneticus (strain ATCC 700980 / DSM 13731 / RS-1) (Desulfovibrio magneticus).